A 323-amino-acid polypeptide reads, in one-letter code: Elongation factor P--(R)-beta-lysine ligase (323 aa).

76-78 (SPE) contributes to the substrate binding site. Residues 100–102 (RNE) and asparagine 109 contribute to the ATP site. Tyrosine 118 provides a ligand contact to substrate. 242 to 243 (EL) contributes to the ATP binding site. Substrate is bound at residue glutamate 249. Glycine 298 provides a ligand contact to ATP.

Belongs to the class-II aminoacyl-tRNA synthetase family. EpmA subfamily. Homodimer.

It carries out the reaction D-beta-lysine + L-lysyl-[protein] + ATP = N(6)-((3R)-3,6-diaminohexanoyl)-L-lysyl-[protein] + AMP + diphosphate + H(+). Its function is as follows. With EpmB is involved in the beta-lysylation step of the post-translational modification of translation elongation factor P (EF-P). Catalyzes the ATP-dependent activation of (R)-beta-lysine produced by EpmB, forming a lysyl-adenylate, from which the beta-lysyl moiety is then transferred to the epsilon-amino group of a conserved specific lysine residue in EF-P. This Haemophilus influenzae (strain PittGG) protein is Elongation factor P--(R)-beta-lysine ligase.